We begin with the raw amino-acid sequence, 540 residues long: Protein PALS2 (540 aa).

2 consecutive L27 domains span residues 1–48 (MQQV…EDSK) and 49–107 (LEAV…YDSP). In terms of domain architecture, PDZ spans 130–209 (ILGIHKRAGE…SVTLKILPSY (80 aa)). The region spanning 215–284 (PQQVFVKCHF…PSQFLEEKRK (70 aa)) is the SH3 domain. In terms of domain architecture, Guanylate kinase-like spans 338–525 (RKTLVLIGAQ…AFEKLQTAIE (188 aa)). Tyr-500 is subject to Phosphotyrosine.

This sequence belongs to the MAGUK family. In terms of assembly, interacts with CADM1. Interacts with the LIN7 proteins. As to expression, abundant in testis, brain, and kidney with lower levels detectable in other tissues.

Its subcellular location is the membrane. This Homo sapiens (Human) protein is Protein PALS2.